A 198-amino-acid polypeptide reads, in one-letter code: Recombination protein RecR (198 aa).

The segment at 57–72 (CSVCGHITDRDPCYIC) adopts a C4-type zinc-finger fold. The region spanning 80–175 (SVVCVVQEPK…KVTRIAHGLP (96 aa)) is the Toprim domain.

Belongs to the RecR family.

Its function is as follows. May play a role in DNA repair. It seems to be involved in an RecBC-independent recombinational process of DNA repair. It may act with RecF and RecO. The chain is Recombination protein RecR from Bacillus cytotoxicus (strain DSM 22905 / CIP 110041 / 391-98 / NVH 391-98).